The following is an 884-amino-acid chain: Androgen receptor (884 aa).

Residues 1 to 522 are modulating; it reads MEVQLGLGRV…PIDYYFPPQK (522 aa). The segment at 1 to 551 is interaction with ZNF318; sequence MEVQLGLGRV…GSCKVFFKRA (551 aa). Disordered stretches follow at residues 33-145 and 174-207; these read VIQN…TLSL and QQQQQEAVSEGSSSGRAREAAGAPTSSKDSYLGG. 2 stretches are compositionally biased toward low complexity: residues 55–79 and 174–196; these read QQQQETSPPQQQQQQQGEDGSPQAQ and QQQQQEAVSEGSSSGRAREAAGA. Position 61 is a phosphoserine; by CDK9 (S61). Phosphoserine is present on S75. The segment covering 197–207 has biased composition (polar residues); sequence PTSSKDSYLGG. Y204 is modified (phosphotyrosine; by CSK). A Phosphoserine modification is found at S237. Y248 bears the Phosphotyrosine; by CSK and TNK2 mark. The disordered stretch occupies residues 275–294; the sequence is DDSADKGTEEPAEYTPFKGS. 4 positions are modified to phosphotyrosine; by CSK: Y288, Y327, Y338, and Y343. Y344 is subject to Phosphotyrosine; by CSK and TNK2. A Glycyl lysine isopeptide (Lys-Gly) (interchain with G-Cter in SUMO) cross-link involves residue K367. Residue Y374 is modified to Phosphotyrosine; by CSK. Residue K485 forms a Glycyl lysine isopeptide (Lys-Gly) (interchain with G-Cter in SUMO) linkage. Y499 and Y516 each carry phosphotyrosine; by CSK. Positions 516–883 are interaction with LPXN; the sequence is YYFPPQKTCL…GKVKPIYFHT (368 aa). The segment at residues 523-596 is a DNA-binding region (nuclear receptor); that stretch reads TCLICGDEAS…AGMTLGARKL (74 aa). 2 consecutive NR C4-type zinc fingers follow at residues 524–544 and 560–584; these read CLICGDEASGCHYGALTCGSC and CASRNDCTIDKFRRKNCPSCRLRKC. The interaction with HIPK3 stretch occupies residues 536–626; it reads YGALTCGSCK…TEESSQKLTV (91 aa). The tract at residues 556-883 is interaction with CCAR1; that stretch reads QKYLCASRND…GKVKPIYFHT (328 aa). The segment at 589 to 883 is interaction with KAT7; it reads MTLGARKLKK…GKVKPIYFHT (295 aa). S615 is modified (phosphoserine; by STK4/MST1). Positions 633–864 constitute an NR LBD domain; sequence ECQPIFLNVL…DFPEMMAEII (232 aa). Residues N670 and R717 each contribute to the 17beta-hydroxy-5alpha-androstan-3-one site. Glycyl lysine isopeptide (Lys-Gly) (interchain with G-Cter in ubiquitin) cross-links involve residues K810 and K812. A 17beta-hydroxy-5alpha-androstan-3-one-binding site is contributed by T842. Position 880 is a phosphotyrosine; by CSK (Y880).

This sequence belongs to the nuclear hormone receptor family. NR3 subfamily. As to quaternary structure, binds DNA as a homodimer. Part of a ternary complex containing AR, EFCAB6/DJBP and PARK7. Interacts with HIPK3 and NR0B2 in the presence of androgen. The ligand binding domain interacts with KAT7/HBO1 in the presence of dihydrotestosterone. Interacts with EFCAB6/DJBP, PQBP1, RANBP9, RBAK, SPDEF, SRA1, TGFB1I1 and RREB1. Interacts with ZMIZ1/ZIMP10 and ZMIZ2/ZMIP7 which both enhance its transactivation activity. Interacts with SLC30A9 and RAD54L2/ARIP4. Interacts with MACROD1 (via macro domain). Interacts via the ligand-binding domain with LXXLL and FXXLF motifs from NCOA1, NCOA2, NCOA3 and MAGEA11. Interacts (via nuclear receptor DNA binding domain and nuclear receptor ligand binding domain) with NCOA4. The AR N-terminal poly-Gln region binds Ran resulting in enhancement of AR-mediated transactivation. Ran-binding decreases as the poly-Gln length increases. Interacts with HIP1 (via coiled coil domain). Interacts (via ligand-binding domain) with TRIM68. Interacts with TNK2. Interacts with USP26. Interacts with RNF6. Interacts (regulated by RNF6 probably through polyubiquitination) with RNF14; regulates AR transcriptional activity. Interacts with PRMT2 and TRIM24. Interacts with RACK1. Interacts with RANBP10; this interaction enhances dihydrotestosterone-induced AR transcriptional activity. Interacts with PRPF6 in a hormone-independent way; this interaction enhances dihydrotestosterone-induced AR transcriptional activity. Interacts with STK4/MST1. Interacts with ZIPK/DAPK3. Interacts with LPXN. Interacts with MAK. Part of a complex containing AR, MAK and NCOA3. Interacts with CRY1. Interacts with CCAR1 and GATA2. Interacts with ZNF318. Interacts with BUD31. Interacts with ARID4A. Interacts with ARID4B. Interacts (via NR LBD domain) with ZBTB7A; the interaction is direct and androgen-dependent. Interacts with NCOR1. Interacts with NCOR2. Interacts with CRY2 in a ligand-dependent manner. Post-translationally, phosphorylated in prostate cancer cells in response to several growth factors including EGF. Phosphorylation is induced by c-Src kinase (CSK). Tyr-499 is one of the major phosphorylation sites and an increase in phosphorylation and Src kinase activity is associated with prostate cancer progression. Phosphorylation by TNK2 enhances the DNA-binding and transcriptional activity. Phosphorylation at Ser-61 by CDK9 regulates AR promoter selectivity and cell growth. Sumoylated on Lys-367 (major) and Lys-485. Ubiquitinated. Deubiquitinated by USP26. 'Lys-6' and 'Lys-27'-linked polyubiquitination by RNF6 modulates AR transcriptional activity and specificity. In terms of processing, palmitoylated by ZDHHC7 and ZDHHC21. Palmitoylation is required for plasma membrane targeting and for rapid intracellular signaling via ERK and AKT kinases and cAMP generation.

It is found in the nucleus. Its subcellular location is the cytoplasm. In terms of biological role, steroid hormone receptors are ligand-activated transcription factors that regulate eukaryotic gene expression and affect cellular proliferation and differentiation in target tissues. Transcription factor activity is modulated by bound coactivator and corepressor proteins like ZBTB7A that recruits NCOR1 and NCOR2 to the androgen response elements/ARE on target genes, negatively regulating androgen receptor signaling and androgen-induced cell proliferation. Transcription activation is also down-regulated by NR0B2. Activated, but not phosphorylated, by HIPK3 and ZIPK/DAPK3. The protein is Androgen receptor (AR) of Eulemur fulvus collaris (Collared brown lemur).